A 352-amino-acid chain; its full sequence is tRNA pseudouridine synthase D (352 aa).

The Nucleophile role is filled by Asp81. A TRUD domain is found at 157–303 (GVPNYFGGQR…MSHERRILRL (147 aa)).

This sequence belongs to the pseudouridine synthase TruD family.

The catalysed reaction is uridine(13) in tRNA = pseudouridine(13) in tRNA. Responsible for synthesis of pseudouridine from uracil-13 in transfer RNAs. The polypeptide is tRNA pseudouridine synthase D (Pseudomonas putida (strain W619)).